Consider the following 88-residue polypeptide: Small ribosomal subunit protein bS20 (88 aa).

Belongs to the bacterial ribosomal protein bS20 family.

Functionally, binds directly to 16S ribosomal RNA. The polypeptide is Small ribosomal subunit protein bS20 (Clostridium acetobutylicum (strain ATCC 824 / DSM 792 / JCM 1419 / IAM 19013 / LMG 5710 / NBRC 13948 / NRRL B-527 / VKM B-1787 / 2291 / W)).